Reading from the N-terminus, the 117-residue chain is UPF0342 protein GWCH70_0629 (117 aa).

This sequence belongs to the UPF0342 family.

The chain is UPF0342 protein GWCH70_0629 from Geobacillus sp. (strain WCH70).